A 150-amino-acid chain; its full sequence is Nucleoside diphosphate kinase (150 aa).

Positions 10, 58, 86, 92, 103, and 113 each coordinate ATP. The active-site Pros-phosphohistidine intermediate is the His116.

The protein belongs to the NDK family. As to quaternary structure, homohexamer. Mg(2+) is required as a cofactor.

It catalyses the reaction a 2'-deoxyribonucleoside 5'-diphosphate + ATP = a 2'-deoxyribonucleoside 5'-triphosphate + ADP. It carries out the reaction a ribonucleoside 5'-diphosphate + ATP = a ribonucleoside 5'-triphosphate + ADP. Functionally, major role in the synthesis of nucleoside triphosphates other than ATP. The ATP gamma phosphate is transferred to the NDP beta phosphate via a ping-pong mechanism, using a phosphorylated active-site intermediate. The protein is Nucleoside diphosphate kinase (awd) of Drosophila yakuba (Fruit fly).